We begin with the raw amino-acid sequence, 223 residues long: Membrane protein (223 aa).

Over 1 to 18 (MAENCTLDSEQAVLLFKE) the chain is Virion surface. A helical membrane pass occupies residues 19–39 (YNLFITAFLLFLTILLQYGYA). Over 40–49 (TRSRTIYILK) the chain is Intravirion. The helical transmembrane segment at 50–70 (MIVLWCFWPLNIAVGVISCIY) threads the bilayer. Residues 71–75 (PPNTG) lie on the Virion surface side of the membrane. A helical membrane pass occupies residues 76-96 (GLVAAIILTVFACLSFVGYWI). The Intravirion portion of the chain corresponds to 97–223 (QSCRLFKRCR…VATGGSSLYT (127 aa)).

Belongs to the gammacoronaviruses M protein family. Homomultimer. Interacts with envelope E protein in the budding compartment of the host cell, which is located between endoplasmic reticulum and the Golgi complex. Forms a complex with HE and S proteins. Interacts with nucleocapsid N protein. This interaction probably participates in RNA packaging into the virus.

It is found in the virion membrane. Its subcellular location is the host Golgi apparatus membrane. Component of the viral envelope that plays a central role in virus morphogenesis and assembly via its interactions with other viral proteins. The chain is Membrane protein from Gallus gallus (Chicken).